A 484-amino-acid polypeptide reads, in one-letter code: Schwannomin-interacting protein 1 (484 aa).

Residues 1–28 (MERSEQRVRAAWDCDPGKQADRDYREDG) show a composition bias toward basic and acidic residues. Disordered stretches follow at residues 1 to 74 (MERS…VSAL), 86 to 220 (KKVI…PPMD), 232 to 258 (QFREQEVRNQGQARTNSTSAQKNERES), and 305 to 350 (SGSD…ESLD). Residues 33-67 (SDAGSSSSSRASSQSNSTKVTPCSECKSSSSPGGS) are compositionally biased toward low complexity. A compositionally biased stretch (acidic residues) spans 92-106 (WAPEEDGEEEEEEDD). Residues 107–120 (RGYRDDGCPAREPG) are compositionally biased toward basic and acidic residues. A compositionally biased stretch (low complexity) spans 123–137 (SARIGSSGSGSRSAA). The segment covering 150 to 159 (HPHDPQDLRH) has biased composition (basic and acidic residues). A compositionally biased stretch (polar residues) spans 239–252 (RNQGQARTNSTSAQ). Residues 306–320 (GSDKDSDADDSKTET) are compositionally biased toward basic and acidic residues. Polar residues predominate over residues 321–332 (SLDTPLSPMSKQ). Acidic residues predominate over residues 341 to 350 (TTEEESESLD). Residues 421-455 (IGQLQVIVNDLHSQIESLNEELVQLLLIRDELHTE) adopt a coiled-coil conformation.

The protein belongs to the SCHIP1 family. As to quaternary structure, homooligomer (via coiled coil domain). Interacts with NF2; the interaction is direct. Interacts with ANK3.

This Mus musculus (Mouse) protein is Schwannomin-interacting protein 1.